Here is a 388-residue protein sequence, read N- to C-terminus: tRNA (guanine(26)-N(2))-dimethyltransferase (388 aa).

In terms of domain architecture, Trm1 methyltransferase spans 4–383 (KTIVEGTTKV…APITEIKEII (380 aa)). Residues arginine 41, arginine 78, aspartate 94, and alanine 123 each coordinate S-adenosyl-L-methionine. Residues cysteine 251, cysteine 254, cysteine 271, and cysteine 274 each coordinate Zn(2+).

It belongs to the class I-like SAM-binding methyltransferase superfamily. Trm1 family.

It catalyses the reaction guanosine(26) in tRNA + 2 S-adenosyl-L-methionine = N(2)-dimethylguanosine(26) in tRNA + 2 S-adenosyl-L-homocysteine + 2 H(+). Functionally, dimethylates a single guanine residue at position 26 of a number of tRNAs using S-adenosyl-L-methionine as donor of the methyl groups. The sequence is that of tRNA (guanine(26)-N(2))-dimethyltransferase from Methanosarcina barkeri (strain Fusaro / DSM 804).